Consider the following 603-residue polypeptide: Geraniol synthase, chloroplastic (603 aa).

A chloroplast-targeting transit peptide spans 1-50; sequence MALQMIAPFLSSFLPNPRHSLAAHGLTHQKCVSKHISCSTTTPTYSTTVP. The (2E)-geranyl diphosphate site is built by arginine 301, aspartate 338, aspartate 342, arginine 479, and aspartate 482. Mg(2+) contacts are provided by aspartate 338 and aspartate 342. Positions 338–342 match the DDXXD motif motif; sequence DDIYD. Mg(2+)-binding residues include aspartate 482, threonine 486, and glutamate 490.

It belongs to the terpene synthase family. Tpsb subfamily. In terms of assembly, homodimer. Requires Mg(2+) as cofactor. It depends on Mn(2+) as a cofactor. In terms of tissue distribution, expressed in the oil cells of the leaves.

Its subcellular location is the plastid. It is found in the chloroplast. The catalysed reaction is (2E)-geranyl diphosphate + H2O = (2E)-geraniol + diphosphate. The protein operates within secondary metabolite biosynthesis; terpenoid biosynthesis. In terms of biological role, monoterpene synthase that catalyzes the formation of geraniol from geranyl diphosphate. This chain is Geraniol synthase, chloroplastic (GerS), found in Cinnamomum tenuipile (Alseodaphne mollis).